The primary structure comprises 115 residues: Large ribosomal subunit protein bL19 (115 aa).

It belongs to the bacterial ribosomal protein bL19 family.

Functionally, this protein is located at the 30S-50S ribosomal subunit interface and may play a role in the structure and function of the aminoacyl-tRNA binding site. This chain is Large ribosomal subunit protein bL19, found in Streptococcus equi subsp. equi (strain 4047).